Here is a 372-residue protein sequence, read N- to C-terminus: Actin-related protein 2/3 complex subunit 1B (372 aa).

6 WD repeats span residues 6–45, 50–89, 94–135, 140–179, 242–280, and 324–367; these read FLVE…WVQV, EHNG…WKPT, RINR…WVCK, PIRS…VEER, SETL…GKLS, and LHKN…SALK.

This sequence belongs to the WD repeat ARPC1 family. As to quaternary structure, component of the Arp2/3 complex composed of ACTR2/ARP2, ACTR3/ARP3, ARPC1B/p41-ARC, ARPC2/p34-ARC, ARPC3/p21-ARC, ARPC4/p20-ARC and ARPC5/p16-ARC.

It localises to the cytoplasm. Its subcellular location is the cytoskeleton. The protein resides in the nucleus. In terms of biological role, component of the Arp2/3 complex, a multiprotein complex that mediates actin polymerization upon stimulation by nucleation-promoting factor (NPF). The Arp2/3 complex mediates the formation of branched actin networks in the cytoplasm, providing the force for cell motility. In addition to its role in the cytoplasmic cytoskeleton, the Arp2/3 complex also promotes actin polymerization in the nucleus, thereby regulating gene transcription and repair of damaged DNA. The Arp2/3 complex promotes homologous recombination (HR) repair in response to DNA damage by promoting nuclear actin polymerization, leading to drive motility of double-strand breaks (DSBs). The chain is Actin-related protein 2/3 complex subunit 1B (ARPC1B) from Bos taurus (Bovine).